The primary structure comprises 572 residues: Isocitrate lyase (572 aa).

104-106 (SGW) is a binding site for substrate. Asp175 lines the Mg(2+) pocket. Catalysis depends on Cys213, which acts as the Proton acceptor. Residues 214 to 215 (GH), Arg250, 437 to 441 (NLSPS), and Thr472 contribute to the substrate site. The disordered stretch occupies residues 550-572 (QFKGSWTGPGSESSSHVLAKSRM). Residues 570 to 572 (SRM) carry the Microbody targeting signal motif.

The protein belongs to the isocitrate lyase/PEP mutase superfamily. Isocitrate lyase family. It depends on Mg(2+) as a cofactor. Expressed in leaves.

The protein localises to the glyoxysome. The enzyme catalyses D-threo-isocitrate = glyoxylate + succinate. It functions in the pathway carbohydrate metabolism; glyoxylate cycle; (S)-malate from isocitrate: step 1/2. Its function is as follows. Involved in storage lipid mobilization during the growth of higher plant seedling. The sequence is that of Isocitrate lyase from Oryza sativa subsp. japonica (Rice).